We begin with the raw amino-acid sequence, 684 residues long: Calpain-14 (684 aa).

A Calpain catalytic domain is found at 43–336 (LFEDTSFPAT…FVLLVICKLT (294 aa)). Residues cysteine 101, histidine 254, and asparagine 278 contribute to the active site. Residues 337–503 (PGLLSQEAAQ…KHIFYEIGSN (167 aa)) form a domain III region. The segment at 504-517 (SGVVFSKEIEDQNE) is linker. The tract at residues 518–683 (RQDEFFTKFF…KPEWMMMALY (166 aa)) is domain IV. EF-hand domains lie at 557-592 (FSLE…LKLS), 586-621 (WKQL…AGIM), and 651-684 (LRVE…ALYS). Ca(2+) contacts are provided by aspartate 570, asparagine 572, serine 574, threonine 576, and glutamate 581.

Belongs to the peptidase C2 family. Not expressed in tissues tested.

In terms of biological role, calcium-regulated non-lysosomal thiol-protease. The protein is Calpain-14 (CAPN14) of Homo sapiens (Human).